A 300-amino-acid chain; its full sequence is Ribosomal protein L11 methyltransferase (300 aa).

Residues T152, G173, D195, and N234 each coordinate S-adenosyl-L-methionine.

Belongs to the methyltransferase superfamily. PrmA family.

The protein resides in the cytoplasm. It carries out the reaction L-lysyl-[protein] + 3 S-adenosyl-L-methionine = N(6),N(6),N(6)-trimethyl-L-lysyl-[protein] + 3 S-adenosyl-L-homocysteine + 3 H(+). In terms of biological role, methylates ribosomal protein L11. In Burkholderia ambifaria (strain MC40-6), this protein is Ribosomal protein L11 methyltransferase.